We begin with the raw amino-acid sequence, 734 residues long: Ribosomal RNA large subunit methyltransferase K/L (734 aa).

The region spanning 43 to 154 (VGYRSCLWSR…RNQLTLSLDL (112 aa)) is the THUMP domain.

This sequence belongs to the methyltransferase superfamily. RlmKL family.

It localises to the cytoplasm. The enzyme catalyses guanosine(2445) in 23S rRNA + S-adenosyl-L-methionine = N(2)-methylguanosine(2445) in 23S rRNA + S-adenosyl-L-homocysteine + H(+). It catalyses the reaction guanosine(2069) in 23S rRNA + S-adenosyl-L-methionine = N(2)-methylguanosine(2069) in 23S rRNA + S-adenosyl-L-homocysteine + H(+). Functionally, specifically methylates the guanine in position 2445 (m2G2445) and the guanine in position 2069 (m7G2069) of 23S rRNA. The polypeptide is Ribosomal RNA large subunit methyltransferase K/L (Hydrogenovibrio crunogenus (strain DSM 25203 / XCL-2) (Thiomicrospira crunogena)).